A 100-amino-acid polypeptide reads, in one-letter code: Urease subunit gamma (100 aa).

The protein belongs to the urease gamma subunit family. In terms of assembly, heterotrimer of UreA (gamma), UreB (beta) and UreC (alpha) subunits. Three heterotrimers associate to form the active enzyme.

Its subcellular location is the cytoplasm. It carries out the reaction urea + 2 H2O + H(+) = hydrogencarbonate + 2 NH4(+). Its pathway is nitrogen metabolism; urea degradation; CO(2) and NH(3) from urea (urease route): step 1/1. The polypeptide is Urease subunit gamma (Agrobacterium fabrum (strain C58 / ATCC 33970) (Agrobacterium tumefaciens (strain C58))).